The following is a 613-amino-acid chain: Envelope glycoprotein gp95 (613 aa).

The first 62 residues, 1-62 (MEAVIKAVLT…VLCEVTGVRA (62 aa)), serve as a signal peptide directing secretion. Positions 14–36 (GETSKKDSKKKPPATSKKDPEKT) are disordered. Over 63–559 (DVHLLEQPGN…EWAVHLLKGL (497 aa)) the chain is Extracellular. 7 disulfides stabilise this stretch: Cys-87/Cys-506, Cys-121/Cys-151, Cys-191/Cys-252, Cys-265/Cys-275, Cys-360/Cys-377, Cys-417/Cys-453, and Cys-498/Cys-505. N-linked (GlcNAc...) asparagine; by host glycans are attached at residues Asn-120, Asn-140, Asn-157, Asn-177, Asn-230, Asn-264, Asn-271, Asn-297, Asn-303, Asn-313, and Asn-321. Residues 184 to 233 (IPSVAGGCIGFTPYDSPAGVYGWDRREVTHILLTDPGNNPFFDKASNSSK) are binding to host receptor. A binding to host receptor region spans residues 268–294 (MRQNWSICQDVWGRGPPENWCTSTGGT). Asn-388 and Asn-398 each carry an N-linked (GlcNAc...) asparagine; by host glycan. Residues 425–445 (GPTARIFASILAPGVAAAQAL) form a fusion peptide region. Asn-460 carries N-linked (GlcNAc...) asparagine; by host glycosylation. Residues 481-497 (LQNRAAIDFLLLAHGHG) form an immunosuppression region. A glycan (N-linked (GlcNAc...) asparagine; by host) is linked at Asn-508. A helical membrane pass occupies residues 560–580 (LLGLVVILLLVVCLPCLLQIV). 2 S-palmitoyl cysteine; by host lipidation sites follow: Cys-572 and Cys-575. The Extracellular segment spans residues 581 to 613 (CGNIRKMINNSISYHTEYKKLQKAYGQPESRIV). Asn-589 is a glycosylation site (N-linked (GlcNAc...) asparagine; by host).

Belongs to the Alpharetroviruses envelope glycoprotein family. Heterodimer with the transmembrane protein. The mature envelope protein (Env) consists of a trimer of SU-TM heterodimers attached by a labile interchain disulfide bond. Interacts with the host cell entry receptor TVB-S3; this interaction allows the viral attachment. As to quaternary structure, heterodimer with the surface protein. The mature envelope protein (Env) consists of a trimer of SU-TM heterodimers attached by a labile interchain disulfide bond. In terms of processing, specific enzymatic cleavages in vivo yield mature proteins. Envelope glycoproteins are synthesized as an inactive precursor that is N-glycosylated and processed likely by host cell furin or by a furin-like protease in the Golgi to yield the mature SU and TM proteins. The cleavage site between SU and TM requires the minimal sequence [KR]-X-[KR]-R. Post-translationally, the transmembrane protein is palmitoylated. Palmitoylation is necessary for glycoprotein function and infectivity.

The protein resides in the virion membrane. Its subcellular location is the host cell membrane. Functionally, the surface protein (SU) attaches the virus to the host cell entry receptor TVB-S3/CAR1. This interaction triggers the refolding of the transmembrane protein (TM) thereby unmasking its fusion peptide and the formation of a reactive thiolate on Cys-100 to activate its fusogenic potential. Fusion occurs at the host cell plasma membrane. Its function is as follows. The transmembrane protein (TM) acts as a class I viral fusion protein. Under the current model, the protein has at least 3 conformational states: pre-fusion native state, pre-hairpin intermediate state, and post-fusion hairpin state. During viral and target cell membrane fusion, the coiled coil regions (heptad repeats) assume a trimer-of-hairpins structure, positioning the fusion peptide in close proximity to the C-terminal region of the ectodomain. The formation of this structure appears to drive apposition and subsequent fusion of viral and target cell membranes. Membranes fusion leads to delivery of the nucleocapsid into the cytoplasm. The sequence is that of Envelope glycoprotein gp95 (env) from Rous sarcoma virus subgroup B (strain Schmidt-Ruppin) (RSV-SR-B).